Consider the following 622-residue polypeptide: Signal recognition particle subunit SRP68 (622 aa).

The tract at residues 576–622 (RDATPKKAAKGSSAAAASSKTSNQEEEEQQGLTGMLSGWKKSFWGNK) is disordered. Positions 585–595 (KGSSAAAASSK) are enriched in low complexity.

This sequence belongs to the SRP68 family. Heterodimer with srpa-72. Srpa-68/srpa-72 heterodimer formation is stabilized by the presence of 7SL RNA. Component of a signal recognition particle (SRP) complex that consists of a 7SL RNA molecule of 300 nucleotides and six protein subunits: srpa-72, srpa-68, SRP54, F37F2.2/SRP19, F25G6.8/SRP14 and ZK512.4/SRP9. Within the SRP complex, interacts (via C-terminus) with srpa-72 (via N-terminus).

Its subcellular location is the cytoplasm. It localises to the nucleus. The protein localises to the nucleolus. The protein resides in the endoplasmic reticulum. In terms of biological role, component of the signal recognition particle (SRP) complex, a ribonucleoprotein complex that mediates the cotranslational targeting of secretory and membrane proteins to the endoplasmic reticulum (ER). The SRP complex interacts with the signal sequence in nascent secretory and membrane proteins and directs them to the membrane of the ER. The SRP complex targets the ribosome-nascent chain complex to the SRP receptor (SR), which is anchored in the ER, where SR compaction and GTPase rearrangement drive cotranslational protein translocation into the ER. Binds the signal recognition particle RNA (7SL RNA), srpa-72 binds to this complex subsequently. The SRP complex possibly participates in the elongation arrest function. In Caenorhabditis elegans, this protein is Signal recognition particle subunit SRP68.